The sequence spans 242 residues: Uridylate kinase (242 aa).

ATP is bound at residue 12–15 (KLSG). The involved in allosteric activation by GTP stretch occupies residues 20–25 (GDEGFG). UMP is bound at residue Gly54. ATP is bound by residues Gly55 and Arg59. Residues Asp74 and 135–142 (TGSPFFTT) contribute to the UMP site. 3 residues coordinate ATP: Thr162, Tyr168, and Asp171.

The protein belongs to the UMP kinase family. As to quaternary structure, homohexamer.

It is found in the cytoplasm. The enzyme catalyses UMP + ATP = UDP + ADP. It participates in pyrimidine metabolism; CTP biosynthesis via de novo pathway; UDP from UMP (UMPK route): step 1/1. With respect to regulation, allosterically activated by GTP. Inhibited by UTP. Catalyzes the reversible phosphorylation of UMP to UDP. The sequence is that of Uridylate kinase from Pasteurella multocida (strain Pm70).